A 1405-amino-acid polypeptide reads, in one-letter code: Sterol 3-beta-glucosyltransferase (1405 aa).

Basic and acidic residues-rich tracts occupy residues 1-16 and 95-105; these read MRPF…DRKL and TGQRPRKESSV. Disordered regions lie at residues 1–27, 83–186, and 203–230; these read MRPF…SASR, ARFD…SATP, and DLKA…ASVS. A compositionally biased stretch (polar residues) spans 106–115; the sequence is RKGTSVSVNT. Over residues 116 to 126 the composition is skewed to low complexity; that stretch reads SSLDPSQRSSS. Residues 206-218 are compositionally biased toward polar residues; sequence ASSTERSQSSLNE. Residues 246 to 285 enclose the GRAM 1 domain; sequence EKVLVEYACSLLQSMLLQGYMYVTEGHICFYAYLPKKSTV. The 100-residue stretch at 285-384 folds into the PH domain; that stretch reads VAIKSGYLHK…WVKALQKVIF (100 aa). Disordered regions lie at residues 461-526 and 566-642; these read SQHL…DSSD and TIYG…SGAP. Residues 483–493 are compositionally biased toward polar residues; it reads RWSLTSGTSRA. The span at 570–589 shows a compositional bias: basic and acidic residues; that stretch reads LDRRPSGRERRGRRNSDETA. Positions 590–603 are enriched in polar residues; the sequence is RSPSTRVNVGTGQQ. A compositionally biased stretch (basic and acidic residues) spans 606-624; that stretch reads ELDRRTDGNTSGREARDTT. The span at 626–642 shows a compositional bias: polar residues; the sequence is ESDQYTQDPTKSFSGAP. One can recognise a GRAM 2 domain in the interval 724 to 790; the sequence is DRFRAHFALP…RDIENVEKEK (67 aa). Residues Ser911, Arg912, Asp914, Ala1214, His1216, His1229, Gly1233, Thr1234, Asp1253, and Gln1254 each contribute to the UDP-alpha-D-glucose site. The segment at 1330-1367 is disordered; that stretch reads SIASSTPFSPTPSAKTAAEQDADDDVEDSEEWTFVGDD. The span at 1332-1348 shows a compositional bias: low complexity; that stretch reads ASSTPFSPTPSAKTAAE. A compositionally biased stretch (acidic residues) spans 1349 to 1367; that stretch reads QDADDDVEDSEEWTFVGDD.

The protein belongs to the glycosyltransferase 28 family.

The protein resides in the cytoplasm. It is found in the preautophagosomal structure membrane. It carries out the reaction a sterol + UDP-alpha-D-glucose = a sterol 3-beta-D-glucoside + UDP + H(+). The enzyme catalyses ergosterol + UDP-alpha-D-glucose = ergosteryl 3-beta-D-glucoside + UDP + H(+). Its function is as follows. Sterol glycosyltransferase responsible for the glycosylation of ergosterol to form ergosterol-glucoside. The chain is Sterol 3-beta-glucosyltransferase from Aspergillus fumigatus (strain ATCC MYA-4609 / CBS 101355 / FGSC A1100 / Af293) (Neosartorya fumigata).